Consider the following 1912-residue polypeptide: Protein javelin (1912 aa).

Disordered regions lie at residues 1–32, 89–145, 298–377, 460–515, 545–586, 764–920, 965–1010, 1257–1297, 1486–1507, and 1881–1912; these read MGNG…QHNY, GTGL…VGGA, RSRH…HRLS, QSRR…SLSE, TTRT…TLRQ, SYNQ…EAPV, IQEN…GKPL, GINS…GGAA, EQQE…QYED, and YDPS…DDKM. 2 stretches are compositionally biased toward basic residues: residues 97-133 and 299-313; these read QQLH…HPHA and SRHK…KKPP. Residues 339 to 354 are compositionally biased toward polar residues; that stretch reads ADDTQSQRSNSATCDS. A compositionally biased stretch (low complexity) spans 355–374; the sequence is HQQQQQQQHQPQQQHQQQQH. Over residues 489-498 the composition is skewed to polar residues; that stretch reads EHSQSSVFPE. The segment covering 499-512 has biased composition (low complexity); sequence TTTSNSDDQTDSPS. Residues 553 to 566 show a composition bias toward acidic residues; the sequence is SEEGEEEQTGEEVV. The segment covering 568-586 has biased composition (polar residues); it reads SLTTPTEPQTSDSESTLRQ. Composition is skewed to basic and acidic residues over residues 772–792 and 802–869; these read QRKE…DSIR and RQRE…RKEE. Residues 890–904 show a composition bias toward acidic residues; it reads SQQEDTVADVEEEDN. The span at 965–979 shows a compositional bias: basic and acidic residues; it reads IQENKETSQRIEPKP. The span at 981–990 shows a compositional bias: low complexity; that stretch reads PKTNSNSSST. Acidic residues-rich tracts occupy residues 1494–1507 and 1903–1912; these read LEEE…QYED and ELYDSLDDKM.

It is found in the cytoplasm. The protein localises to the cytoskeleton. Important for normal assembly of actin bundles during bristle formation. In Drosophila melanogaster (Fruit fly), this protein is Protein javelin.